Consider the following 187-residue polypeptide: Large ribosomal subunit protein uL18 (187 aa).

The protein belongs to the universal ribosomal protein uL18 family. Part of the 50S ribosomal subunit. Interacts with proteins L5 and L21e, and attaches the 5S rRNA to the 23S rRNA. Has been cross-linked to L21e.

Its function is as follows. This is one of 5 proteins that mediate the attachment of the 5S rRNA onto the large ribosomal subunit, where it forms part of the central protuberance and stabilizes the orientation of adjacent RNA domains. The chain is Large ribosomal subunit protein uL18 (rpl18) from Haloarcula marismortui (strain ATCC 43049 / DSM 3752 / JCM 8966 / VKM B-1809) (Halobacterium marismortui).